The primary structure comprises 75 residues: MSSGGLLLLLGLLTLWAELTPVSGQDRPVKPGLCPPRPQKPPCVKECKNDWSCRGEQKCCHYGCIYECRDPIFVK.

The first 24 residues, methionine 1–glycine 24, serve as a signal peptide directing secretion. Positions arginine 27 to isoleucine 72 constitute a WAP domain. Intrachain disulfides connect cysteine 34–cysteine 60, cysteine 43–cysteine 64, cysteine 47–cysteine 59, and cysteine 53–cysteine 68.

It belongs to the venom waprin family. Expressed by the venom gland.

It is found in the secreted. Its function is as follows. Damages membranes of susceptible bacteria. Has no hemolytic activity. Not toxic to mice. Does not inhibit the proteinases elastase and cathepsin G. The polypeptide is Porwaprin-b (Pseudechis porphyriacus (Red-bellied black snake)).